The following is a 570-amino-acid chain: High-affinity hexose transporter HXT6 (570 aa).

Topologically, residues 1-60 (MSQDAAIAEQTPVEHLSAVDSASHSVLSTPSNKAERDEIKAYGEGEEHEPVVEIPKRPAS) are cytoplasmic. Residues 61–81 (AYVTVSIMCIMIAFGGFVFGW) traverse the membrane as a helical segment. At 82–116 (DTGTISGFINQTDFIRRFGMKHKDGTNYLSKVRTG) the chain is on the extracellular side. Residue N91 is glycosylated (N-linked (GlcNAc...) asparagine). A helical transmembrane segment spans residues 117–137 (LIVSIFNIGCAIGGIILSKLG). At 138-143 (DMYGRK) the chain is on the cytoplasmic side. A helical membrane pass occupies residues 144 to 164 (VGLIVVVVIYIIGIIIQIASI). Residues 165–174 (NKWYQYFIGR) are Extracellular-facing. A helical transmembrane segment spans residues 175–195 (IISGLGVGGIAVLSPMLISEV). The Cytoplasmic segment spans residues 196 to 201 (SPKHLR). Residues 202 to 222 (GTLVSCYQLMITAGIFLGYCT) form a helical membrane-spanning segment. Residues 223 to 236 (NFGTKNYSNSVQWR) lie on the Extracellular side of the membrane. Residue N228 is glycosylated (N-linked (GlcNAc...) asparagine). The helical transmembrane segment at 237–257 (VPLGLCFAWALFMIGGMTFVP) threads the bilayer. Residues 258–340 (ESPRYLAEVG…IQSLQQLTGD (83 aa)) lie on the Cytoplasmic side of the membrane. A helical transmembrane segment spans residues 341-357 (NYFFYYGTTIFKAVGLS). Residues 358 to 363 (DSFETS) lie on the Extracellular side of the membrane. Residues 364–381 (IVLGIVNFASTFVGIYVV) form a helical membrane-spanning segment. Over 382-388 (ERYGRRT) the chain is Cytoplasmic. A helical membrane pass occupies residues 389 to 409 (CLLWGAASMTACMVVYASVGV). At 410-431 (TRLWPNGQDQPSSKGAGNCMIV) the chain is on the extracellular side. A helical transmembrane segment spans residues 432 to 452 (FACFYIFCFATTWAPIPYVVV). The Cytoplasmic portion of the chain corresponds to 453–469 (SETFPLRVKSKAMSIAT). Residues 470 to 490 (AANWLWGFLIGFFTPFITGAI) form a helical membrane-spanning segment. Residue N491 is a topological domain, extracellular. A helical transmembrane segment spans residues 492 to 512 (FYYGYVFMGCLVFMFFYVLLV). The Cytoplasmic portion of the chain corresponds to 513 to 570 (VPETKGLTLEEVNTMWEEGVLPWKSASWVPPSRRGANYDAEEMAHDDKPLYKRMFSTK). A Glycyl lysine isopeptide (Lys-Gly) (interchain with G-Cter in ubiquitin) cross-link involves residue K560.

It belongs to the major facilitator superfamily. Sugar transporter (TC 2.A.1.1) family.

The protein localises to the membrane. Functionally, high-affinity glucose transporter. The chain is High-affinity hexose transporter HXT6 (HXT6) from Saccharomyces cerevisiae (strain ATCC 204508 / S288c) (Baker's yeast).